Here is a 469-residue protein sequence, read N- to C-terminus: 3-isopropylmalate dehydratase large subunit (469 aa).

Residues Cys349, Cys410, and Cys413 each coordinate [4Fe-4S] cluster.

The protein belongs to the aconitase/IPM isomerase family. LeuC type 1 subfamily. As to quaternary structure, heterodimer of LeuC and LeuD. It depends on [4Fe-4S] cluster as a cofactor.

The enzyme catalyses (2R,3S)-3-isopropylmalate = (2S)-2-isopropylmalate. It participates in amino-acid biosynthesis; L-leucine biosynthesis; L-leucine from 3-methyl-2-oxobutanoate: step 2/4. Its function is as follows. Catalyzes the isomerization between 2-isopropylmalate and 3-isopropylmalate, via the formation of 2-isopropylmaleate. The sequence is that of 3-isopropylmalate dehydratase large subunit from Azoarcus sp. (strain BH72).